The primary structure comprises 328 residues: MPLHHLTRFPRLELIGAPTPLEYLPRLSDYLGREIYIKRDDVTPIAMGGNKLRKLEFLVADALREGADTLITAGAIQSNHVRQTAAVAAKLGLHCVALLENPIGTTAENYLTNGNRLLLDLFNTQIEMCDALTDPDAQLQTLATRIEAQGFRPYVIPVGGSSALGAMGYVESALEIVQQCEEVVGLSSVVVASGSAGTHAGLAVGLEHLMPDVELIGVTVSRSVAEQKPKVIALQQAIAGQLALTATADIHLWDDYFAPGYGVPNDAGMEAVKLLANLEGVLLDPVYTGKAMAGLIDGISQKRFNDDGPILFIHTGGAPALFAYHPHV.

Residue lysine 51 is modified to N6-(pyridoxal phosphate)lysine.

It belongs to the ACC deaminase/D-cysteine desulfhydrase family. As to quaternary structure, homodimer. Requires pyridoxal 5'-phosphate as cofactor.

The catalysed reaction is D-cysteine + H2O = hydrogen sulfide + pyruvate + NH4(+) + H(+). In terms of biological role, catalyzes the alpha,beta-elimination reaction of D-cysteine and of several D-cysteine derivatives. It could be a defense mechanism against D-cysteine. The chain is D-cysteine desulfhydrase from Salmonella typhi.